A 339-amino-acid polypeptide reads, in one-letter code: Alpha-ketoglutarate-dependent dioxygenase btcD (339 aa).

Residue H96 participates in substrate binding. Fe cation contacts are provided by H140 and D142. T173 serves as a coordination point for 2-oxoglutarate. Residues 207–230 (DGSDPKFQVPRGSPANVGTNLRPT) form a disordered region. Residue H302 participates in Fe cation binding. 2-oxoglutarate-binding residues include R314 and R318. R318 provides a ligand contact to substrate.

This sequence belongs to the TfdA dioxygenase family. Requires Fe(2+) as cofactor.

It functions in the pathway secondary metabolite biosynthesis; terpenoid biosynthesis. Functionally, alpha-ketoglutarate-dependent dioxygenase; part of the gene cluster that mediates the biosynthesis of betaestacins. The bifunctional terpene synthase btcA converts isopentenyl diphosphate (IPP) and dimethylallyl diphosphate (DMAPP) into the sesterterpene betaestacin I. The C-terminal prenyltransferase (PT) domain of btcA catalyzes formation of GFPP, whereas the N-terminal terpene cyclase (TC) domain catalyzes the cyclization of GFPP into betaestacin I. The cytochrome P450 monooxygenase btcB is then responsible for the six-step oxidation of betaestacin I to yield betaestacin II. The roles of the cytochrome P450 monooxygenase btcC and the alpha-ketoglutarate-dependent dioxygenase btcD have not been identified yet. The sequence is that of Alpha-ketoglutarate-dependent dioxygenase btcD from Neocamarosporium betae (Beet black rot fungus).